The primary structure comprises 218 residues: Embryonic polyadenylate-binding protein 2-A (218 aa).

Over residues 1 to 16 the composition is skewed to basic and acidic residues; it reads MSERVSEEPGLDKGDG. Disordered regions lie at residues 1-26 and 169-218; these read MSER…DDPE and RTNM…NHPY. Residues 93–170 enclose the RRM domain; that stretch reads RSVYVGNVDY…RTIKVLPKRT (78 aa). A compositionally biased stretch (low complexity) spans 205 to 218; sequence FRGCGRPGPLNHPY.

The protein resides in the cytoplasm. Its function is as follows. Binds the poly(A) tail of mRNA. Unable to interact with the cap-binding complex and is therefore unlikely to be involved in translation initiation. The chain is Embryonic polyadenylate-binding protein 2-A (Pabpn1l-a) from Xenopus laevis (African clawed frog).